A 185-amino-acid polypeptide reads, in one-letter code: ATP synthase subunit b (185 aa).

A helical transmembrane segment spans residues 28–48 (VVLVGFAVLMYIVVKFVVPMF).

Belongs to the ATPase B chain family. In terms of assembly, F-type ATPases have 2 components, F(1) - the catalytic core - and F(0) - the membrane proton channel. F(1) has five subunits: alpha(3), beta(3), gamma(1), delta(1), epsilon(1). F(0) has three main subunits: a(1), b(2) and c(10-14). The alpha and beta chains form an alternating ring which encloses part of the gamma chain. F(1) is attached to F(0) by a central stalk formed by the gamma and epsilon chains, while a peripheral stalk is formed by the delta and b chains.

Its subcellular location is the cell membrane. F(1)F(0) ATP synthase produces ATP from ADP in the presence of a proton or sodium gradient. F-type ATPases consist of two structural domains, F(1) containing the extramembraneous catalytic core and F(0) containing the membrane proton channel, linked together by a central stalk and a peripheral stalk. During catalysis, ATP synthesis in the catalytic domain of F(1) is coupled via a rotary mechanism of the central stalk subunits to proton translocation. Functionally, component of the F(0) channel, it forms part of the peripheral stalk, linking F(1) to F(0). In Paenarthrobacter aurescens (strain TC1), this protein is ATP synthase subunit b.